We begin with the raw amino-acid sequence, 340 residues long: Oxygen-dependent coproporphyrinogen-III oxidase (340 aa).

Over residues 1–14 (MTVSPTTQPQTNHS) the composition is skewed to polar residues. Residues 1 to 22 (MTVSPTTQPQTNHSLPPADAKQ) are disordered. Ser109 contributes to the substrate binding site. Positions 113 and 123 each coordinate a divalent metal cation. Residue His123 is the Proton donor of the active site. 125-127 (NYR) provides a ligand contact to substrate. The a divalent metal cation site is built by His157 and His187. The tract at residues 278–313 (YVEFNLVYDRGTIFGLQTNGRTESILMSLPPLVRWQ) is important for dimerization. 296 to 298 (NGR) contributes to the substrate binding site.

It belongs to the aerobic coproporphyrinogen-III oxidase family. Homodimer. Requires a divalent metal cation as cofactor.

Its subcellular location is the cytoplasm. It catalyses the reaction coproporphyrinogen III + O2 + 2 H(+) = protoporphyrinogen IX + 2 CO2 + 2 H2O. It participates in porphyrin-containing compound metabolism; protoporphyrin-IX biosynthesis; protoporphyrinogen-IX from coproporphyrinogen-III (O2 route): step 1/1. In terms of biological role, involved in the heme and chlorophyll biosynthesis. Catalyzes the aerobic oxidative decarboxylation of propionate groups of rings A and B of coproporphyrinogen-III to yield the vinyl groups in protoporphyrinogen-IX. The protein is Oxygen-dependent coproporphyrinogen-III oxidase of Synechocystis sp. (strain ATCC 27184 / PCC 6803 / Kazusa).